The primary structure comprises 138 residues: Large ribosomal subunit protein uL16 (138 aa).

The segment covering 1–17 (MLIPRKVKHRKQHHPRQ) has biased composition (basic residues). The segment at 1–22 (MLIPRKVKHRKQHHPRQRGIAS) is disordered.

It belongs to the universal ribosomal protein uL16 family. In terms of assembly, part of the 50S ribosomal subunit.

Binds 23S rRNA and is also seen to make contacts with the A and possibly P site tRNAs. In Mycobacterium avium (strain 104), this protein is Large ribosomal subunit protein uL16.